The primary structure comprises 412 residues: 43 kDa receptor-associated protein of the synapse (412 aa).

A lipid anchor (N-myristoyl glycine) is attached at Gly-2. 7 TPR repeats span residues 6-39, 83-116, 123-156, 163-196, 206-239, 246-279, and 286-319; these read TKQQ…SADP, TEGY…QGTT, GQVS…AHNN, CRVC…VNDY, AMSQ…ALQH, ALCL…MTEI, and IQVL…AEGL. Tyr-196 is modified (phosphotyrosine). An RING-type zinc finger spans residues 363–403; sequence CGMCGESIGEKNNQLQALPCSHFFHLKCLQTNGTRGCPNCR.

Belongs to the RAPsyn family. As to expression, expressed in muscle fibers and in neurons.

The protein resides in the cell membrane. The protein localises to the postsynaptic cell membrane. It localises to the cytoplasm. Its subcellular location is the cytoskeleton. Functionally, postsynaptic protein required for clustering of nicotinic acetylcholine receptors (nAChRs) at the neuromuscular junction. It may link the receptor to the underlying postsynaptic cytoskeleton, possibly by direct association with actin or spectrin. The chain is 43 kDa receptor-associated protein of the synapse (RAPSN) from Gallus gallus (Chicken).